Consider the following 159-residue polypeptide: Ribosomal RNA large subunit methyltransferase H (159 aa).

Residues leucine 76, glycine 108, and 127 to 132 each bind S-adenosyl-L-methionine; that span reads FSKMTF.

This sequence belongs to the RNA methyltransferase RlmH family. In terms of assembly, homodimer.

The protein resides in the cytoplasm. The catalysed reaction is pseudouridine(1915) in 23S rRNA + S-adenosyl-L-methionine = N(3)-methylpseudouridine(1915) in 23S rRNA + S-adenosyl-L-homocysteine + H(+). Functionally, specifically methylates the pseudouridine at position 1915 (m3Psi1915) in 23S rRNA. The chain is Ribosomal RNA large subunit methyltransferase H from Clostridium botulinum (strain Langeland / NCTC 10281 / Type F).